We begin with the raw amino-acid sequence, 89 residues long: Cell division topological specificity factor (89 aa).

The protein belongs to the MinE family.

Prevents the cell division inhibition by proteins MinC and MinD at internal division sites while permitting inhibition at polar sites. This ensures cell division at the proper site by restricting the formation of a division septum at the midpoint of the long axis of the cell. The protein is Cell division topological specificity factor of Desulforudis audaxviator (strain MP104C).